A 147-amino-acid chain; its full sequence is VEWTDGERTAILTLWKKINVEEIGAQAMGRLLIVYPWTHRHFASFGNLSTPSAIMSNDKVAKHGATVMGGLDKAIKNMDDIKNAYRDLSVMHSEKLHVDPDNFRLLSECITLCVAAKFGPKEFNADVHEAWYKFLMAVTSALARQYH.

The region spanning 2–147 (EWTDGERTAI…VTSALARQYH (146 aa)) is the Globin domain. His-63 and His-92 together coordinate heme b.

The protein belongs to the globin family. As to quaternary structure, heterotetramer of two alpha chains and two beta chains. Red blood cells.

Functionally, involved in oxygen transport from gills to the various peripheral tissues. The sequence is that of Hemoglobin anodic subunit beta from Gymnothorax unicolor (Brown moray).